The primary structure comprises 479 residues: Bifunctional AAC/APH (479 aa).

The 173-residue stretch at 8-180 folds into the N-acetyltransferase domain; it reads ICIRTLIDDD…DCYLMEYRYD (173 aa). An acetyl-CoA binding site region spans residues 110–153; the sequence is KGIGTRYIKLIFEFLKKERNANAVILDPHKNNPRAIRAYQKSGF. The Proton acceptor; for phosphotransferase activity role is filled by aspartate 374. An a gentamycin-binding site is contributed by aspartate 393.

The protein in the C-terminal section; belongs to the aminoglycoside phosphotransferase family.

It is found in the cytoplasm. It catalyses the reaction a gentamycin + GTP = a gentamycin 2''-phosphate + GDP + H(+). In terms of biological role, involved in resistance to gentamicin, tobramycin, and kanamycin. Tobramycin and kanamycin resistance is due to the ACC activity, specified by N-terminal region. The C-terminal region is a kinase that phosphorylates several 4,6-disubstituted aminoglycosides. In Enterococcus faecalis (strain ATCC 700802 / V583), this protein is Bifunctional AAC/APH (aacA-aphD).